The sequence spans 566 residues: Serine/threonine-protein kinase PknE (566 aa).

The Cytoplasmic segment spans residues 1-337 (MDGTAESREG…PLPRSARQPW (337 aa)). Ser7 carries the post-translational modification Phosphoserine; by autocatalysis. A Phosphothreonine; by autocatalysis modification is found at Thr11. The 260-residue stretch at 16-275 (YRLRRLVGRG…DLSAAAHAAL (260 aa)) folds into the Protein kinase domain. Residues 22-30 (VGRGGMGDV) and Lys45 contribute to the ATP site. 2 positions are modified to phosphothreonine; by autocatalysis: Thr50 and Thr59. The Proton acceptor role is filled by Asp139. A phosphothreonine; by autocatalysis mark is found at Thr170, Thr175, and Thr178. Residues 296–330 (PVPSTHPVSPGTRWPQPTPWAGGAPPWGPPSSPLP) are disordered. A helical transmembrane segment spans residues 338-358 (LWVGVAVAVVVALAGGLGIAL). Over 359-566 (AHPWRSSGPR…DPSWLARLIG (208 aa)) the chain is Extracellular.

The protein belongs to the protein kinase superfamily. Ser/Thr protein kinase family. Post-translationally, autophosphorylated on serine and threonine residues. Dephosphorylated by PstP.

It is found in the cell membrane. The enzyme catalyses L-seryl-[protein] + ATP = O-phospho-L-seryl-[protein] + ADP + H(+). It carries out the reaction L-threonyl-[protein] + ATP = O-phospho-L-threonyl-[protein] + ADP + H(+). This is Serine/threonine-protein kinase PknE (pknE) from Mycobacterium bovis (strain ATCC BAA-935 / AF2122/97).